The primary structure comprises 30 residues: Trypsin inhibitor 3 (30 aa).

Disulfide bonds link C4-C21, C11-C23, and C17-C29.

The protein belongs to the protease inhibitor I7 (squash-type serine protease inhibitor) family.

The protein resides in the secreted. Its function is as follows. Inhibits lysyl endopeptidase and trypsin. This Cucumis melo var. conomon (Oriental pickling melon) protein is Trypsin inhibitor 3.